The primary structure comprises 927 residues: Valine--tRNA ligase (927 aa).

The 'HIGH' region signature appears at P45 to H55. A 'KMSKS' region motif is present at residues K571 to S575. K574 contributes to the ATP binding site. A coiled-coil region spans residues S856–A917.

The protein belongs to the class-I aminoacyl-tRNA synthetase family. ValS type 1 subfamily. In terms of assembly, monomer.

The protein localises to the cytoplasm. It catalyses the reaction tRNA(Val) + L-valine + ATP = L-valyl-tRNA(Val) + AMP + diphosphate. Catalyzes the attachment of valine to tRNA(Val). As ValRS can inadvertently accommodate and process structurally similar amino acids such as threonine, to avoid such errors, it has a 'posttransfer' editing activity that hydrolyzes mischarged Thr-tRNA(Val) in a tRNA-dependent manner. The protein is Valine--tRNA ligase of Mesorhizobium japonicum (strain LMG 29417 / CECT 9101 / MAFF 303099) (Mesorhizobium loti (strain MAFF 303099)).